The chain runs to 432 residues: Glutamate-1-semialdehyde 2,1-aminomutase 1 (432 aa).

K272 bears the N6-(pyridoxal phosphate)lysine mark.

It belongs to the class-III pyridoxal-phosphate-dependent aminotransferase family. HemL subfamily. As to quaternary structure, homodimer. The cofactor is pyridoxal 5'-phosphate.

The protein resides in the cytoplasm. It catalyses the reaction (S)-4-amino-5-oxopentanoate = 5-aminolevulinate. Its pathway is porphyrin-containing compound metabolism; protoporphyrin-IX biosynthesis; 5-aminolevulinate from L-glutamyl-tRNA(Glu): step 2/2. This is Glutamate-1-semialdehyde 2,1-aminomutase 1 from Exiguobacterium sp. (strain ATCC BAA-1283 / AT1b).